A 358-amino-acid polypeptide reads, in one-letter code: Stearoyl-CoA desaturase 2 (358 aa).

The Cytoplasmic portion of the chain corresponds to 1-71 (MPAHILQEIS…EGPPPKLEYV (71 aa)). The interval 16–39 (TTTITAPPSGGQQNGGEKFEKSSH) is disordered. A helical membrane pass occupies residues 72–92 (WRNIILMALLHLGALYGITLV). Asn74 provides a ligand contact to substrate. Residues 93–96 (PSCK) are Lumenal-facing. Residues 97–117 (LYTCLFAYLYYVISALGITAG) form a helical membrane-spanning segment. The Cytoplasmic segment spans residues 118–216 (AHRLWSHRTY…EKLVMFQRRY (99 aa)). Fe cation is bound by residues His119 and His124. Positions 119-124 (HRLWSH) match the Histidine box-1 motif. Residues Asn147, Arg154, and Asp155 each contribute to the substrate site. The Fe cation site is built by His156, His159, and His160. Residues 156–160 (HRAHH) carry the Histidine box-2 motif. Arg187 and Lys188 together coordinate substrate. A helical membrane pass occupies residues 217-236 (YKPGLLLMCFVLPTLVPWYC). Over 237–240 (WGET) the chain is Lumenal. A helical transmembrane segment spans residues 241–262 (FVNSLCVSTFLRYAVVLNATWL). Trp261 contributes to the substrate binding site. At 263–358 (VNSAAHLYGY…RTGDGSCKSG (96 aa)) the chain is on the cytoplasmic side. Residues His268, His297, His300, and His301 each coordinate Fe cation. Residues 297 to 301 (HNYHH) carry the Histidine box-3 motif.

The protein belongs to the fatty acid desaturase type 1 family. The cofactor is Fe(2+). Detected in brain and skin. Highly expressed in brain, and detected at low levels in heart, stomach, lung and testis. Detected both in dermis and epidermis.

It localises to the endoplasmic reticulum membrane. It is found in the microsome membrane. It catalyses the reaction octadecanoyl-CoA + 2 Fe(II)-[cytochrome b5] + O2 + 2 H(+) = (9Z)-octadecenoyl-CoA + 2 Fe(III)-[cytochrome b5] + 2 H2O. It carries out the reaction hexadecanoyl-CoA + 2 Fe(II)-[cytochrome b5] + O2 + 2 H(+) = (9Z)-hexadecenoyl-CoA + 2 Fe(III)-[cytochrome b5] + 2 H2O. Stearoyl-CoA desaturase that utilizes O(2) and electrons from reduced cytochrome b5 to introduce the first double bond into saturated fatty acyl-CoA substrates. Catalyzes the insertion of a cis double bond at the delta-9 position into fatty acyl-CoA substrates including palmitoyl-CoA and stearoyl-CoA. Gives rise to a mixture of 16:1 and 18:1 unsaturated fatty acids. Contributes to the biosynthesis of membrane phospholipids, cholesterol esters and triglycerides, especially during embryonic development and in neonates. Important for normal permeability barrier function of the skin in neonates. This is Stearoyl-CoA desaturase 2 (Scd2) from Mus musculus (Mouse).